We begin with the raw amino-acid sequence, 516 residues long: Probable fucosyltransferase 8 (516 aa).

The helical; Signal-anchor for type II membrane protein transmembrane segment at 5–25 threads the bilayer; that stretch reads ITVVTCLFLLSVMQLSFFNIF. Over 26 to 516 the chain is Lumenal; that stretch reads NYQLLDATTN…ITGLKLVDSN (491 aa). N-linked (GlcNAc...) asparagine glycans are attached at residues asparagine 35, asparagine 116, asparagine 211, asparagine 362, and asparagine 463.

Belongs to the glycosyltransferase 37 family. As to expression, expressed in leaves and stems.

The protein resides in the golgi apparatus. It localises to the golgi stack membrane. The protein operates within protein modification; protein glycosylation. Its function is as follows. May be involved in cell wall biosynthesis. May act as a fucosyltransferase. This is Probable fucosyltransferase 8 (FUT8) from Arabidopsis thaliana (Mouse-ear cress).